The sequence spans 77 residues: Translation initiation factor IF-1, chloroplastic (77 aa).

The region spanning 1–71 (MKEQKWIHEG…TRGRIIYRLR (71 aa)) is the S1-like domain.

It belongs to the IF-1 family. Component of the 30S ribosomal translation pre-initiation complex which assembles on the 30S ribosome in the order IF-2 and IF-3, IF-1 and N-formylmethionyl-tRNA(fMet); mRNA recruitment can occur at any time during PIC assembly.

It is found in the plastid. The protein localises to the chloroplast. One of the essential components for the initiation of protein synthesis. Stabilizes the binding of IF-2 and IF-3 on the 30S subunit to which N-formylmethionyl-tRNA(fMet) subsequently binds. Helps modulate mRNA selection, yielding the 30S pre-initiation complex (PIC). Upon addition of the 50S ribosomal subunit IF-1, IF-2 and IF-3 are released leaving the mature 70S translation initiation complex. The polypeptide is Translation initiation factor IF-1, chloroplastic (Montinia caryophyllacea (Wild clove bush)).